The following is a 78-amino-acid chain: uncharacterized protein (78 aa).

This is an uncharacterized protein from Schizosaccharomyces pombe (strain 972 / ATCC 24843) (Fission yeast).